The chain runs to 440 residues: NADH-quinone oxidoreductase subunit D (440 aa).

Belongs to the complex I 49 kDa subunit family. As to quaternary structure, NDH-1 is composed of 14 different subunits. Subunits NuoB, C, D, E, F, and G constitute the peripheral sector of the complex.

The protein localises to the cell membrane. The catalysed reaction is a quinone + NADH + 5 H(+)(in) = a quinol + NAD(+) + 4 H(+)(out). Its function is as follows. NDH-1 shuttles electrons from NADH, via FMN and iron-sulfur (Fe-S) centers, to quinones in the respiratory chain. The immediate electron acceptor for the enzyme in this species is believed to be a menaquinone. Couples the redox reaction to proton translocation (for every two electrons transferred, four hydrogen ions are translocated across the cytoplasmic membrane), and thus conserves the redox energy in a proton gradient. This is NADH-quinone oxidoreductase subunit D from Acidothermus cellulolyticus (strain ATCC 43068 / DSM 8971 / 11B).